The primary structure comprises 1170 residues: DNA excision repair protein ERCC-5 (1170 aa).

The tract at residues 1 to 78 (MGVQGLWKLL…RIRPIFVFDG (78 aa)) is N-domain. Position 8 is an N6-acetyllysine (Lys8). Asp30 lines the Mg(2+) pocket. Positions 31-67 (ISIWLNQALKGVRDSHGNVIENAHLLTLFHRLCKLLF) are DNA-binding; may bind to the undamaged single-strand DNA of the DNA repair bubble. A Mg(2+)-binding site is contributed by Asp77. Residues 79 to 784 (DAPLLKKQTL…LRLFGVPYIQ (706 aa)) form a spacer region region. 3 disordered regions span residues 304–479 (DSES…RCDT), 520–587 (HVSG…PKAC), and 600–701 (LENA…ECLL). The segment covering 306-323 (ESLPSSSNVHSVSSNLKS) has biased composition (low complexity). Composition is skewed to basic and acidic residues over residues 324-336 (SPHEKVKPEREPE) and 363-373 (SREGRQSKERN). Position 384 is a phosphoserine (Ser384). Residues 455-474 (TSGSSANGQTDSAHSFTTAS) are compositionally biased toward polar residues. Basic and acidic residues predominate over residues 539 to 551 (THSDQGIDIHPED). Residues 659-676 (SVVSNSELQTESSEASTH) show a composition bias toward polar residues. Residues 677 to 698 (LSEKDAEEPRETLEEGTSRDTE) show a composition bias toward basic and acidic residues. Ser704 and Ser705 each carry phosphoserine. The segment at 785-880 (APMEAEAQCA…VTAMEILNEF (96 aa)) is I-domain. Mg(2+)-binding residues include Glu788, Glu790, Asp809, and Asp811. The interval 819–835 (HVYKNFFNKNKFVEYYQ) is DNA-binding; may bind to the undamaged single-strand DNA of the DNA repair bubble. A DNA-binding; H2TH (helix-2turn-helix) motif which binds double-stranded DNA region spans residues 847–879 (RNKLINLAYLLGSDYTEGIPTVGCVTAMEILNE). Residue Asp860 coordinates Mg(2+). Residues 911–917 (TKVKKKL) are DNA-binding; may bind double-stranded DNA. The segment at 980-1008 (LKHLNAHQTQLRIDSFFRLAQQEKQDAKL) is interaction with PCNA. An interaction with ERCC6/CSB region spans residues 1010 to 1170 (KSHRLNRAVT…KSMKRRKKKT (161 aa)). The segment at 1033–1146 (LTKVTEALDD…DDEDKAKTVL (114 aa)) is disordered. The segment covering 1041–1060 (DDAKGKTQKRELPYKKETSV) has biased composition (basic and acidic residues). The Nuclear localization signal 1 motif lies at 1049-1065 (KRELPYKKETSVPKRRR). Polar residues predominate over residues 1094–1110 (SVMSARQRSAAESSKIS). The Nuclear localization signal 2 signature appears at 1153-1170 (FGKKKLKLKSMKRRKKKT).

It belongs to the XPG/RAD2 endonuclease family. XPG subfamily. In terms of assembly, monomer. Homodimer. Component of the homologous recombination repair (HR) complex composed of ERCC5/XPG, BRCA2, PALB2, DSS1 and RAD51. Within the complex, interacts with BRCA2 and PALB2. Interacts with RNA polymerase II. Interacts (via C-terminus) with ERCC6/CSB; the interaction stimulates ERCC6/CSB binding to the DNA repair bubble and ERCC6/CSB ATPase activity. May form a complex composed of RNA polymerase II, ERCC6/CSB and ERCC5/XPG which associates with the DNA repair bubble during transcription-coupled nucleotide excision repair. Interacts with BRCA1; the interaction promotes the release of BRCA1 from DNA. Interacts with PCNA. Interacts with NTHL1; the interaction stimulates NTHL1 activity and NTHL1 binding to its DNA substrate. The cofactor is Mg(2+).

It localises to the nucleus. The protein resides in the chromosome. Functionally, single-stranded structure-specific DNA endonuclease involved in DNA excision repair. Makes the 3'incision in DNA nucleotide excision repair (NER). Binds and bends DNA repair bubble substrate and breaks base stacking at the single-strand/double-strand DNA junction of the DNA bubble. Plays a role in base excision repair (BER) by promoting the binding of DNA glycosylase NTHL1 to its substrate and increasing NTHL1 catalytic activity that removes oxidized pyrimidines from DNA. Involved in transcription-coupled nucleotide excision repair (TCR) which allows RNA polymerase II-blocking lesions to be rapidly removed from the transcribed strand of active genes. Functions during the initial step of TCR in cooperation with ERCC6/CSB to recognized stalled RNA polymerase II. Also, stimulates ERCC6/CSB binding to the DNA repair bubble and ERCC6/CSB ATPase activity. Required for DNA replication fork maintenance and preservation of genomic stability. Involved in homologous recombination repair (HRR) induced by DNA replication stress by recruiting RAD51, BRCA2, and PALB2 to the damaged DNA site. During HRR, binds to the replication fork with high specificity and stabilizes it. Also, acts upstream of HRR, to promote the release of BRCA1 from DNA. This is DNA excision repair protein ERCC-5 (Ercc5) from Mus musculus (Mouse).